Consider the following 335-residue polypeptide: Nuclear envelope-associated protein 2 (335 aa).

Coiled coils occupy residues 55-85 (RKEAEKKAKNMEMEICKLQKKLEDRNCELVA) and 125-260 (CSVL…LKKK). Residues 239 to 260 (KTKELESQLERQRRADQELKKK) carry the Bipartite nuclear localization signal motif. A helical transmembrane segment spans residues 312–329 (FWDTSGFKIVVSMSMLIL).

As to quaternary structure, forms homomers and heteromers with NEAP1 and NEAP3. Interacts with SUN1 and SUN2.

It localises to the nucleus inner membrane. The protein resides in the nucleus. It is found in the nucleoplasm. The protein is Nuclear envelope-associated protein 2 of Arabidopsis thaliana (Mouse-ear cress).